Reading from the N-terminus, the 254-residue chain is Alcohol dehydrogenase (254 aa).

Residue 10-33 (FVAGLGGIGLDTSREIVKSGPKNL) participates in NAD(+) binding. S138 contributes to the substrate binding site. Y151 serves as the catalytic Proton acceptor.

It belongs to the short-chain dehydrogenases/reductases (SDR) family. Homodimer.

The catalysed reaction is a primary alcohol + NAD(+) = an aldehyde + NADH + H(+). It carries out the reaction a secondary alcohol + NAD(+) = a ketone + NADH + H(+). This Drosophila hawaiiensis (Fruit fly) protein is Alcohol dehydrogenase (Adh).